We begin with the raw amino-acid sequence, 447 residues long: N-succinylarginine dihydrolase (447 aa).

Substrate is bound by residues 19–28, Asn110, and 137–138; these read AGLSFGNEAS and HR. The active site involves Glu174. Arg212 provides a ligand contact to substrate. His248 is an active-site residue. The substrate site is built by Asp250 and Asn359. Cys365 acts as the Nucleophile in catalysis.

This sequence belongs to the succinylarginine dihydrolase family. As to quaternary structure, homodimer.

It carries out the reaction N(2)-succinyl-L-arginine + 2 H2O + 2 H(+) = N(2)-succinyl-L-ornithine + 2 NH4(+) + CO2. Its pathway is amino-acid degradation; L-arginine degradation via AST pathway; L-glutamate and succinate from L-arginine: step 2/5. Functionally, catalyzes the hydrolysis of N(2)-succinylarginine into N(2)-succinylornithine, ammonia and CO(2). The sequence is that of N-succinylarginine dihydrolase from Escherichia coli O8 (strain IAI1).